We begin with the raw amino-acid sequence, 507 residues long: Protein disulfide-isomerase (507 aa).

Residues 1-20 (MASMVSFCFLLLFLAFFASS) form the signal peptide. Residues 21-144 (FNEIYAEESE…IVDYLKKQSG (124 aa)) enclose the Thioredoxin 1 domain. Active-site nucleophile residues include Cys62 and Cys65. An intrachain disulfide couples Cys62 to Cys65. Asn181 and Asn278 each carry an N-linked (GlcNAc...) asparagine glycan. The 121-residue stretch at 365-485 (YRKSEPIPEH…FIEFIEKNRE (121 aa)) folds into the Thioredoxin 2 domain. Active-site nucleophile residues include Cys407 and Cys410. The cysteines at positions 407 and 410 are disulfide-linked. The interval 484 to 507 (REKSSKKESIVKDDQTDSETKAEL) is disordered. A Prevents secretion from ER motif is present at residues 504–507 (KAEL).

It belongs to the protein disulfide isomerase family.

It localises to the endoplasmic reticulum lumen. It carries out the reaction Catalyzes the rearrangement of -S-S- bonds in proteins.. Its function is as follows. Participates in the folding of proteins containing disulfide bonds, may be involved in glycosylation, prolyl hydroxylation and triglyceride transfer. In Datisca glomerata (Durango root), this protein is Protein disulfide-isomerase (PDI).